The primary structure comprises 628 residues: Chaperone protein HtpG (628 aa).

An a; substrate-binding region spans residues 1-337 (MSEKKYTFET…SADLPLNVSR (337 aa)). Positions 338–554 (EILQHNKVID…DYGMSLHMQK (217 aa)) are b. The segment at 555–628 (MMEEAGQSFM…FVKLVNKYIR (74 aa)) is c.

It belongs to the heat shock protein 90 family. Homodimer.

It is found in the cytoplasm. Molecular chaperone. Has ATPase activity. The polypeptide is Chaperone protein HtpG (Francisella tularensis subsp. holarctica (strain FTNF002-00 / FTA)).